A 95-amino-acid chain; its full sequence is Large ribosomal subunit protein bL27 (95 aa).

A propeptide spanning residues 1 to 6 is cleaved from the precursor; it reads MILQLF.

The protein belongs to the bacterial ribosomal protein bL27 family. In terms of processing, the N-terminus is cleaved by ribosomal processing cysteine protease Prp.

The sequence is that of Large ribosomal subunit protein bL27 from Caldanaerobacter subterraneus subsp. tengcongensis (strain DSM 15242 / JCM 11007 / NBRC 100824 / MB4) (Thermoanaerobacter tengcongensis).